Reading from the N-terminus, the 524-residue chain is Cytochrome P450 6k1 (524 aa).

C464 contributes to the heme binding site.

It belongs to the cytochrome P450 family. The cofactor is heme.

The protein localises to the endoplasmic reticulum membrane. Its subcellular location is the microsome membrane. The polypeptide is Cytochrome P450 6k1 (CYP6K1) (Blattella germanica (German cockroach)).